The following is a 370-amino-acid chain: Zinc finger protein 830 (370 aa).

Disordered regions lie at residues 1-21 (MASS…QEEL) and 75-220 (HRER…LVPH). Residue Ala2 is modified to N-acetylalanine. The stretch at 16–40 (VNQEELRRLMKEKQRLSTNRKRIES) forms a coiled coil. Residues 53–75 (CALCNTPVKSELLWQTHVLGKQH) form a C2H2-type zinc finger. Over residues 90-99 (QGPSAGTAPQ) the composition is skewed to polar residues. Over residues 104-115 (KTTDVESQDAKK) the composition is skewed to basic and acidic residues. The span at 121–134 (DQVQPSTSASSANF) shows a compositional bias: polar residues. Over residues 156–171 (DYEEEEEEEEEEELGG) the composition is skewed to acidic residues. Positions 172 to 191 (GEERRDSSKHLPDAQGREHS) are enriched in basic and acidic residues. Positions 196-212 (RETTSNVLPNDPFNTNP) are enriched in polar residues. Phosphoserine is present on Ser223. Residues 310–338 (IECYRRVEKLRNRQDEIKNKLKEVLTIKE) adopt a coiled-coil conformation. A phosphoserine mark is found at Ser349 and Ser360.

In terms of assembly, component of the XAB2 complex, a multimeric protein complex composed of XAB2, PRPF19, AQR, ZNF830, ISY1, and PPIE; this complex binds preferentially to RNA. Interacts with XAB2. Identified in a pentameric intron-binding (IB) complex composed of AQR, XAB2, ISY1, ZNF830 and PPIE that is incorporated into the spliceosome as a preassembled complex. The IB complex does not contain PRPF19. In terms of processing, phosphorylated in response to DNA damage by the cell cycle checkpoint kinases ATR/ATM.

It localises to the nucleus. The protein resides in the chromosome. Its subcellular location is the nucleus speckle. May play a role in pre-mRNA splicing as component of the spliceosome. Acts as an important regulator of the cell cycle that participates in the maintenance of genome integrity. During cell cycle progression in embryonic fibroblast, prevents replication fork collapse, double-strand break formation and cell cycle checkpoint activation. Controls mitotic cell cycle progression and cell survival in rapidly proliferating intestinal epithelium and embryonic stem cells. During the embryo preimplantation, controls different aspects of M phase. During early oocyte growth, plays a role in oocyte survival by preventing chromosomal breaks formation, activation of TP63 and reduction of transcription. The protein is Zinc finger protein 830 of Rattus norvegicus (Rat).